The sequence spans 110 residues: MKHCFLILFTLIVFTVVWSLEENEEYPDEDEMIESFMDGYSYRGDDGTCILKGDHCHGTCDCCGWTTTCRKSKSAGGKICKSEGSSISAFNAIAKGVAAMKKAKCKHKSG.

The N-terminal stretch at 1 to 19 is a signal peptide; it reads MKHCFLILFTLIVFTVVWS. Residues 20–43 constitute a propeptide that is removed on maturation; that stretch reads LEENEEYPDEDEMIESFMDGYSYR. 4 disulfide bridges follow: Cys-49-Cys-63, Cys-56-Cys-69, Cys-60-Cys-105, and Cys-62-Cys-80.

It belongs to the neurotoxin 03 (Tx2) family. 02 subfamily. As to expression, expressed by the venom gland.

It is found in the secreted. Functionally, probable ion channel inhibitor. This is U32-theraphotoxin-Cg1a from Chilobrachys guangxiensis (Chinese earth tiger tarantula).